The chain runs to 30 residues: Ranatuerin-2OK (30 aa).

The cysteines at positions 23 and 30 are disulfide-linked.

As to expression, expressed by the skin glands.

It localises to the secreted. Functionally, antimicrobial peptide. Active against Gram-negative bacterium E.coli (MIC=12.5 uM) and against Gram-positive bacterium S.aureus (MIC=50 uM). This is Ranatuerin-2OK from Nidirana okinavana (Kampira Falls frog).